A 388-amino-acid polypeptide reads, in one-letter code: Sporulation-specific mitogen-activated protein kinase SMK1 (388 aa).

Positions 38–337 (YEIIQFLGKG…VEQAISHPFL (300 aa)) constitute a Protein kinase domain. Residues 44 to 52 (LGKGAYGTV) and lysine 69 contribute to the ATP site. Aspartate 166 functions as the Proton acceptor in the catalytic mechanism. Residues 207 to 209 (TNY) carry the TXY motif.

This sequence belongs to the protein kinase superfamily. CMGC Ser/Thr protein kinase family. MAP kinase subfamily. In terms of assembly, interacts with GSC2. Mg(2+) serves as cofactor. In terms of processing, dually phosphorylated on Thr-207 and Tyr-209, which activates the enzyme.

The catalysed reaction is L-seryl-[protein] + ATP = O-phospho-L-seryl-[protein] + ADP + H(+). The enzyme catalyses L-threonyl-[protein] + ATP = O-phospho-L-threonyl-[protein] + ADP + H(+). Its activity is regulated as follows. Activated by tyrosine and threonine phosphorylation. In terms of biological role, required for spore wall assembly. Required for proper deposition of the two outer layers of the spore wall, the chitosan and dityrosine layers. Negatively regulates GSC2, an alternate catalytic subunit of the 1,3-beta-glucan synthase (GS). Participates in a developmentally regulated signal transduction pathway that coordinates cytodifferentiation events with the transcriptional program. This Saccharomyces cerevisiae (strain ATCC 204508 / S288c) (Baker's yeast) protein is Sporulation-specific mitogen-activated protein kinase SMK1 (SMK1).